The primary structure comprises 349 residues: Prostaglandin reductase 1 (349 aa).

Position 18 is a phosphothreonine (Thr18). Residue Ser20 is modified to Phosphoserine. Residues 152 to 155 (GAVG), Lys178, Tyr193, Asn217, 239 to 245 (CGAISMY), 270 to 272 (FIF), and Asn321 each bind NADP(+). Lys178 is subject to N6-(2-hydroxyisobutyryl)lysine; alternate. Lys178 carries the N6-acetyllysine; alternate modification.

This sequence belongs to the NADP-dependent oxidoreductase L4BD family. Monomer or homodimer.

The protein resides in the cytoplasm. It carries out the reaction 13,14-dihydro-15-oxo-prostaglandin E1 + NADP(+) = 15-oxoprostaglandin E1 + NADPH + H(+). It catalyses the reaction 13,14-dihydro-15-oxo-prostaglandin E2 + NADP(+) = 15-oxoprostaglandin E2 + NADPH + H(+). The enzyme catalyses 13,14-dihydro-15-oxo-prostaglandin F1alpha + NADP(+) = 15-oxoprostaglandin F1alpha + NADPH + H(+). The catalysed reaction is 13,14-dihydro-15-oxo-PGF2alpha + NADP(+) = 15-oxoprostaglandin F2alpha + NADPH + H(+). It carries out the reaction leukotriene B4 + NADP(+) = 12-oxo-leukotriene B4 + NADPH + H(+). It catalyses the reaction 20-hydroxy-leukotriene B4 + NADP(+) = 12-oxo-20-hydroxy-leukotriene B4 + NADPH + H(+). The enzyme catalyses 6-trans-leukotriene B4 + NADP(+) = 12-oxo-(5S)-hydroxy-(6E,8E,10E,14Z)-eicosatetraenoate + NADPH + H(+). The catalysed reaction is (5S,12S)-dihydroxy-(6E,10E,12E,14Z)-eicosatetraenoate + NADP(+) = 12-oxo-(5S)-hydroxy-(6E,8E,10E,14Z)-eicosatetraenoate + NADPH + H(+). It carries out the reaction an n-alkanal + NADP(+) = an alk-2-enal + NADPH + H(+). It catalyses the reaction hexanal + NADP(+) = (E)-hex-2-enal + NADPH + H(+). The enzyme catalyses octanal + NADP(+) = (2E)-octenal + NADPH + H(+). The catalysed reaction is decanal + NADP(+) = (2E)-decenal + NADPH + H(+). It carries out the reaction dodecanal + NADP(+) = (2E)-dodecenal + NADPH + H(+). It catalyses the reaction 4-hydroxynonanal + NADP(+) = (E)-4-hydroxynon-2-enal + NADPH + H(+). The enzyme catalyses pentan-2-one + NADP(+) = (E)-pent-3-en-2-one + NADPH + H(+). The catalysed reaction is nonan-2-one + NADP(+) = (3E)-nonen-2-one + NADPH + H(+). NAD(P)H-dependent oxidoreductase involved in metabolic inactivation of pro- and anti-inflammatory eicosanoids: prostaglandins (PG), leukotrienes (LT) and lipoxins (LX). Catalyzes with high efficiency the reduction of the 13,14 double bond of 15-oxoPGs, including 15-oxo-PGE1, 15-oxo-PGE2, 15-oxo-PGF1-alpha and 15-oxo-PGF2-alpha. Catalyzes with lower efficiency the oxidation of the hydroxyl group at C12 of LTB4 and its derivatives, converting them into biologically less active 12-oxo-LTB4 metabolites. Reduces 15-oxo-LXA4 to 13,14 dihydro-15-oxo-LXA4, enhancing neutrophil recruitment at the inflammatory site. Plays a role in metabolic detoxification of alkenals and ketones. Reduces alpha,beta-unsaturated alkenals and ketones, particularly those with medium-chain length, showing highest affinity toward (2E)-decenal and (3E)-3-nonen-2-one. May inactivate 4-hydroxy-2-nonenal, a cytotoxic lipid constituent of oxidized low-density lipoprotein particles. In Oryctolagus cuniculus (Rabbit), this protein is Prostaglandin reductase 1 (PTGR1).